A 427-amino-acid chain; its full sequence is G2/mitotic-specific cyclin-3 (427 aa).

A compositionally biased stretch (polar residues) spans 1–12; that stretch reads MHHNSQSLSSGH. Disordered regions lie at residues 1-29 and 89-126; these read MHHN…NLKH and SVAQ…EDQE. Basic and acidic residues predominate over residues 89 to 105; sequence SVAQRKEADHNDLLTDR. A compositionally biased stretch (acidic residues) spans 106 to 126; the sequence is EQEEPVEDDGESEEDEEEDQE.

The protein belongs to the cyclin family. Cyclin AB subfamily.

Functionally, essential for the control of the cell cycle at the G2/M (mitosis) transition. Interacts with the CDC2 protein kinase to form MPF. G2/M cyclins accumulate steadily during G2 and are abruptly destroyed at mitosis. The chain is G2/mitotic-specific cyclin-3 (CLB3) from Saccharomyces cerevisiae (strain ATCC 204508 / S288c) (Baker's yeast).